The sequence spans 151 residues: UPF0208 membrane protein YfbV (151 aa).

2 helical membrane passes run 46–65 and 69–91; these read YAIRFMPPIAVFTLCWQIAL and LGPAVATALFALSLPMQGLWWLG.

The protein belongs to the UPF0208 family.

Its subcellular location is the cell inner membrane. This chain is UPF0208 membrane protein YfbV, found in Shigella boydii serotype 18 (strain CDC 3083-94 / BS512).